The chain runs to 96 residues: Large ribosomal subunit protein eL21 (96 aa).

Residues methionine 1–glycine 37 form a disordered region. The span at threonine 11 to glycine 23 shows a compositional bias: basic and acidic residues.

Belongs to the eukaryotic ribosomal protein eL21 family.

This chain is Large ribosomal subunit protein eL21, found in Haloquadratum walsbyi (strain DSM 16790 / HBSQ001).